The primary structure comprises 235 residues: Probable flavin-dependent thymidylate synthase (235 aa).

One can recognise a ThyX domain in the interval Met1–Glu229. Residues Ser70 and Arg93–Arg95 contribute to the FAD site. DUMP-binding positions include Glu90 to Arg93, Ser103 to Arg105, and Arg168. The ThyX motif motif lies at Arg93–Ser103. Asn184 to Arg186 is a binding site for FAD. Arg195 serves as a coordination point for dUMP. Catalysis depends on Arg195, which acts as the Involved in ionization of N3 of dUMP, leading to its activation.

Belongs to the thymidylate synthase ThyX family. In terms of assembly, homotetramer. The cofactor is FAD.

The catalysed reaction is dUMP + (6R)-5,10-methylene-5,6,7,8-tetrahydrofolate + NADPH + H(+) = dTMP + (6S)-5,6,7,8-tetrahydrofolate + NADP(+). It participates in pyrimidine metabolism; dTTP biosynthesis. Functionally, catalyzes the reductive methylation of 2'-deoxyuridine-5'-monophosphate (dUMP) to 2'-deoxythymidine-5'-monophosphate (dTMP) while utilizing 5,10-methylenetetrahydrofolate (mTHF) as the methyl donor, and NADPH and FADH(2) as the reductant. This chain is Probable flavin-dependent thymidylate synthase (48), found in Mycobacterium (Mycobacteriophage D29).